The chain runs to 102 residues: Trans-acting regulatory protein HvrA (102 aa).

A DNA-binding region spans residues 80-85 (RGRKPK).

It belongs to the histone-like protein H-NS family. As to quaternary structure, homodimer that oligomerizes on DNA into higher-order complexes that form bridges between disparate regions of DNA compacting it.

It is found in the cytoplasm. Its subcellular location is the nucleoid. Its function is as follows. A dim-light trans-acting activator of Puf and Puh expression, that has no effect on the expression of the Puc operon. Responsible for regulating light-harvesting-I and reaction center structural gene expression differentially from that of light-harvesting-II expression in response to alterations in light. Proper light regulation of light-harvesting and reaction center polypeptide synthesis is an important physiological trait that enables cells to adapt to ever-changing environmental conditions of light intensity. This chain is Trans-acting regulatory protein HvrA (hvrA), found in Rhodobacter capsulatus (Rhodopseudomonas capsulata).